A 474-amino-acid polypeptide reads, in one-letter code: Trigger factor (474 aa).

The 88-residue stretch at 171-258 (GDVAVIDFQG…LKELKTRDLP (88 aa)) folds into the PPIase FKBP-type domain. Positions 441-474 (TEVDAASATVETTATETAEEAPEAPKAKKGKKKA) are disordered. A compositionally biased stretch (low complexity) spans 444–456 (DAASATVETTATE).

Belongs to the FKBP-type PPIase family. Tig subfamily.

Its subcellular location is the cytoplasm. It catalyses the reaction [protein]-peptidylproline (omega=180) = [protein]-peptidylproline (omega=0). Involved in protein export. Acts as a chaperone by maintaining the newly synthesized protein in an open conformation. Functions as a peptidyl-prolyl cis-trans isomerase. The protein is Trigger factor of Synechococcus elongatus (strain ATCC 33912 / PCC 7942 / FACHB-805) (Anacystis nidulans R2).